Consider the following 504-residue polypeptide: Glutamate--tRNA ligase (504 aa).

Residues 27–37 (PSPTGTPHVGL) carry the 'HIGH' region motif. The 'KMSKS' region signature appears at 271-275 (KLSKR). Lysine 274 is an ATP binding site.

This sequence belongs to the class-I aminoacyl-tRNA synthetase family. Glutamate--tRNA ligase type 1 subfamily. Monomer.

The protein localises to the cytoplasm. The enzyme catalyses tRNA(Glu) + L-glutamate + ATP = L-glutamyl-tRNA(Glu) + AMP + diphosphate. Functionally, catalyzes the attachment of glutamate to tRNA(Glu) in a two-step reaction: glutamate is first activated by ATP to form Glu-AMP and then transferred to the acceptor end of tRNA(Glu). This chain is Glutamate--tRNA ligase, found in Arthrobacter sp. (strain FB24).